A 130-amino-acid polypeptide reads, in one-letter code: Small ribosomal subunit protein uS11 (130 aa).

It belongs to the universal ribosomal protein uS11 family. As to quaternary structure, part of the 30S ribosomal subunit.

Functionally, located on the platform of the 30S subunit. This chain is Small ribosomal subunit protein uS11, found in Nanoarchaeum equitans (strain Kin4-M).